A 139-amino-acid chain; its full sequence is Putative lipoprotein MIP_01412 (139 aa).

Positions methionine 1–alanine 19 are cleaved as a signal peptide. Cysteine 20 carries N-palmitoyl cysteine lipidation. Residue cysteine 20 is the site of S-diacylglycerol cysteine attachment.

This sequence belongs to the mycobacterial 19 kDa antigen family.

It is found in the cell membrane. The sequence is that of Putative lipoprotein MIP_01412 from Mycobacterium indicus pranii (strain DSM 45239 / MTCC 9506).